Reading from the N-terminus, the 464-residue chain is Soluble pyridine nucleotide transhydrogenase (464 aa).

35–44 serves as a coordination point for FAD; that stretch reads EASSQVGGSC.

The protein belongs to the class-I pyridine nucleotide-disulfide oxidoreductase family. Requires FAD as cofactor.

It localises to the cytoplasm. The enzyme catalyses NAD(+) + NADPH = NADH + NADP(+). Its function is as follows. Conversion of NADPH, generated by peripheral catabolic pathways, to NADH, which can enter the respiratory chain for energy generation. This is Soluble pyridine nucleotide transhydrogenase from Marinomonas sp. (strain MWYL1).